Reading from the N-terminus, the 494-residue chain is Cobyric acid synthase (494 aa).

Residues 252–444 enclose the GATase cobBQ-type domain; the sequence is DLNIAVIRLP…LHGLFDNGPW (193 aa). Residue C333 is the Nucleophile of the active site. The active site involves H436.

It belongs to the CobB/CobQ family. CobQ subfamily.

The protein operates within cofactor biosynthesis; adenosylcobalamin biosynthesis. In terms of biological role, catalyzes amidations at positions B, D, E, and G on adenosylcobyrinic A,C-diamide. NH(2) groups are provided by glutamine, and one molecule of ATP is hydrogenolyzed for each amidation. The chain is Cobyric acid synthase from Nostoc punctiforme (strain ATCC 29133 / PCC 73102).